We begin with the raw amino-acid sequence, 303 residues long: Ferrochelatase (303 aa).

Fe cation contacts are provided by histidine 185 and glutamate 262.

It belongs to the ferrochelatase family.

The protein localises to the cytoplasm. It carries out the reaction heme b + 2 H(+) = protoporphyrin IX + Fe(2+). It functions in the pathway porphyrin-containing compound metabolism; protoheme biosynthesis; protoheme from protoporphyrin-IX: step 1/1. Functionally, catalyzes the ferrous insertion into protoporphyrin IX. The sequence is that of Ferrochelatase from Campylobacter jejuni subsp. jejuni serotype O:2 (strain ATCC 700819 / NCTC 11168).